We begin with the raw amino-acid sequence, 393 residues long: Reticulon-like protein 2 (393 aa).

Low complexity predominate over residues 1 to 21 (MNRNTTTNKNANLNNSRNANA). The disordered stretch occupies residues 1–25 (MNRNTTTNKNANLNNSRNANAPGEA). Residues 1–60 (MNRNTTTNKNANLNNSRNANAPGEAGHQNKTGLIYWTNPSKSGASFAATLVSLLILRNVN) are Cytoplasmic-facing. Positions 30 to 236 (KTGLIYWTNP…SISNENKSST (207 aa)) constitute a Reticulon domain. A helical membrane pass occupies residues 61–81 (VISVLLKIGYMVLFTSFAVEL). The Lumenal portion of the chain corresponds to 82 to 149 (STKVLFDKGV…IGVSLYFLHG (68 aa)). Residue N137 is glycosylated (N-linked (GlcNAc...) asparagine). Residues 150 to 170 (LFAIFSMNTVLIMTTIFLYTV) form a helical membrane-spanning segment. The Cytoplasmic portion of the chain corresponds to 171 to 393 (PLIYDRKQAR…HGLKQKLQHA (223 aa)). Disordered stretches follow at residues 214–313 (IIPP…DVKT) and 339–393 (GDYN…LQHA). Residues 220-285 (DEGSYSTSIS…PVSQNENIGT (66 aa)) are compositionally biased toward polar residues. Phosphoserine is present on S278. Over residues 289 to 313 (GKQEIPTEKDFNNRHENFSKPDVKT) the composition is skewed to basic and acidic residues. Residues 365–376 (PAESQSIPIKNN) show a composition bias toward polar residues. Residues 381–393 (KTTHGLKQKLQHA) show a composition bias toward basic residues.

It is found in the endoplasmic reticulum membrane. In Saccharomyces cerevisiae (strain ATCC 204508 / S288c) (Baker's yeast), this protein is Reticulon-like protein 2 (RTN2).